A 216-amino-acid polypeptide reads, in one-letter code: Molybdenum cofactor guanylyltransferase (216 aa).

GTP is bound by residues 16–18 (LAG), K28, N57, D73, and D108. Position 108 (D108) interacts with Mg(2+).

It belongs to the MobA family. As to quaternary structure, monomer. The cofactor is Mg(2+).

The protein localises to the cytoplasm. It catalyses the reaction Mo-molybdopterin + GTP + H(+) = Mo-molybdopterin guanine dinucleotide + diphosphate. Its function is as follows. Transfers a GMP moiety from GTP to Mo-molybdopterin (Mo-MPT) cofactor (Moco or molybdenum cofactor) to form Mo-molybdopterin guanine dinucleotide (Mo-MGD) cofactor. The polypeptide is Molybdenum cofactor guanylyltransferase (Rhizobium rhizogenes (strain K84 / ATCC BAA-868) (Agrobacterium radiobacter)).